Here is a 475-residue protein sequence, read N- to C-terminus: Melanopsin (475 aa).

Over Met-1–Ser-21 the chain is Extracellular. The helical transmembrane segment at Cys-22 to Tyr-42 threads the bilayer. The Cytoplasmic portion of the chain corresponds to Ser-43 to Tyr-53. Residues Phe-54–Phe-74 form a helical membrane-spanning segment. Residues Leu-75–Asn-90 lie on the Extracellular side of the membrane. Cys-89 and Cys-167 are disulfide-bonded. Residues Phe-91–Ser-111 traverse the membrane as a helical segment. Residues Val-112–Cys-134 lie on the Cytoplasmic side of the membrane. Residues Ile-135–Trp-155 traverse the membrane as a helical segment. Topologically, residues Ser-156–Cys-187 are extracellular. N-linked (GlcNAc...) asparagine glycosylation occurs at Asn-178. The chain crosses the membrane as a helical span at residues Phe-188–Ile-208. At Arg-209–Lys-240 the chain is on the cytoplasmic side. The chain crosses the membrane as a helical span at residues Ile-241–Leu-261. Over Ile-262–Lys-276 the chain is Extracellular. A helical transmembrane segment spans residues Ser-277–Ile-297. Position 284 is an N6-(retinylidene)lysine (Lys-284). Residues His-298–His-475 lie on the Cytoplasmic side of the membrane. 2 disordered regions span residues Val-370–Glu-390 and Pro-445–His-475. A compositionally biased stretch (basic residues) spans Lys-375–Ser-384. Over residues Pro-445 to Glu-454 the composition is skewed to polar residues. Acidic residues predominate over residues Glu-455 to Val-464. Over residues Gln-465 to His-475 the composition is skewed to basic and acidic residues.

It belongs to the G-protein coupled receptor 1 family. Opsin subfamily. Highest level in the lateral eye. Low level in the brain.

Its subcellular location is the cell membrane. In terms of biological role, photoreceptor implicated in non-image-forming responses to light. May be able to isomerize covalently bound all-trans retinal back to 11-cis retinal. This is Melanopsin (OPN4) from Podarcis siculus (Italian wall lizard).